A 177-amino-acid polypeptide reads, in one-letter code: ATP-dependent protease subunit HslV (177 aa).

Thr2 is an active-site residue. The Na(+) site is built by Gly157, Cys160, and Thr163.

Belongs to the peptidase T1B family. HslV subfamily. In terms of assembly, a double ring-shaped homohexamer of HslV is capped on each side by a ring-shaped HslU homohexamer. The assembly of the HslU/HslV complex is dependent on binding of ATP.

It localises to the cytoplasm. The enzyme catalyses ATP-dependent cleavage of peptide bonds with broad specificity.. With respect to regulation, allosterically activated by HslU binding. In terms of biological role, protease subunit of a proteasome-like degradation complex believed to be a general protein degrading machinery. This chain is ATP-dependent protease subunit HslV, found in Aeromonas salmonicida (strain A449).